We begin with the raw amino-acid sequence, 405 residues long: Aurora kinase A (405 aa).

Polar residues-rich tracts occupy residues 32 to 82 and 91 to 110; these read VPSQ…QLQA and RSLNNTQKSEQPSSSAPGNN. Positions 32 to 127 are disordered; it reads VPSQNPLSAN…KQKNEESKKR (96 aa). 2 positions are modified to phosphoserine: S42 and S52. The span at 111-127 shows a compositional bias: basic and acidic residues; that stretch reads SEKELATKQKNEESKKR. Residues 134-384 form the Protein kinase domain; that stretch reads FEIGRPLGKG…LKDVLEHPWI (251 aa). ATP is bound by residues K144, K163, and 212–214; that span reads EYA. D257 functions as the Proton acceptor in the catalytic mechanism. K259 is covalently cross-linked (Glycyl lysine isopeptide (Lys-Gly) (interchain with G-Cter in SUMO2)). ATP is bound by residues 261 to 262 and D275; that span reads EN. Positions 281 to 294 are activation segment; it reads HAPSSRRTTLCGTL. T288 and T289 each carry phosphothreonine. S343 is modified (phosphoserine). The interval 385–405 is disordered; the sequence is MANSSKPSSSQKSKDSTSKQS. Positions 396 to 405 are enriched in basic and acidic residues; that stretch reads KSKDSTSKQS.

It belongs to the protein kinase superfamily. Ser/Thr protein kinase family. Aurora subfamily. In terms of assembly, part of a complex composed of NEDD9, AURKA and CTTN; within the complex NEDD9 acts as a scaffold protein and is required for complex formation. Identified in a complex with AUNIP and NIN. Interacts with FBXL7. Interacts with CPEB1, JTB, TACC1, TPX2, PPP2CA, as well as with the protein phosphatase type 1 (PP1) isoforms PPP1CA, PPP1CB and PPP1CC. Also interacts with its substrates ARHGEF2, BORA, KIF2A, PARD3, and p53/TP53. Interaction with BORA promotes phosphorylation of PLK1. Interacts with CIMAP3. Interacts with GADD45A, competing with its oligomerization. Interacts (via C-terminus) with AUNIP (via C-terminus). Interacts with FRY; this interaction facilitates AURKA-mediated PLK1 phosphorylation. Interacts with SIRT2. Interacts with MYCN; interaction is phospho-independent and triggers AURKA activation; AURKA competes with FBXW7 for binding to unphosphorylated MYCN but not for binding to phosphorylated MYCN. Interacts with HNRNPU. Interacts with AAAS. Interacts with KLHL18 and CUL3. Interacts with FOXP1. Interacts with HDAC6; AURKA-mediated phosphorylation of HDAC6 promotes deacetylation of alpha-tubulin. Post-translationally, activated by phosphorylation at Thr-289; this brings about a change in the conformation of the activation segment. Phosphorylation at Thr-289 varies during the cell cycle and is highest during M phase. Autophosphorylated at Thr-289 upon TPX2 binding. Thr-289 can be phosphorylated by several kinases, including PAK and PKA. Protein phosphatase type 1 (PP1) binds AURKA and inhibits its activity by dephosphorylating Thr-289 during mitosis. Phosphorylation at Ser-343 decreases the kinase activity. PPP2CA controls degradation by dephosphorylating Ser-52 at the end of mitosis. Ubiquitinated by the E3 ubiquitin-protein ligase complex SCF(FBXL7) during mitosis, leading to its degradation by the proteasome. Ubiquitinated by CHFR, leading to its degradation by the proteasome. Ubiquitinated by the anaphase-promoting complex (APC), leading to its degradation by the proteasome. Ubiquitinated by the CUL3-KLHL18 ligase leading to its activation at the centrosome which is required for initiating mitotic entry. Ubiquitination mediated by CUL3-KLHL18 ligase does not lead to its degradation by the proteasome.

The protein localises to the cytoplasm. It localises to the cytoskeleton. Its subcellular location is the microtubule organizing center. The protein resides in the centrosome. It is found in the spindle pole. The protein localises to the centriole. It localises to the cell projection. Its subcellular location is the neuron projection. The protein resides in the cilium. It is found in the cilium basal body. The protein localises to the basolateral cell membrane. It catalyses the reaction L-seryl-[protein] + ATP = O-phospho-L-seryl-[protein] + ADP + H(+). The catalysed reaction is L-threonyl-[protein] + ATP = O-phospho-L-threonyl-[protein] + ADP + H(+). Activation of CDK1, appears to be an upstream event of AURKA activation. Phosphatase inhibitor-2 (PPP1R2) and TPX2 act also as activators. Inactivated by the G2 checkpoint. Inhibited by GADD45A and p53/TP53, and through dephosphorylation by protein phosphatase type 1 (PP1). MLN8054 is also a potent and selective inhibitor. Activated during the early phase of cilia disassembly in the presence of CIMAP3. Inhibited by the small molecule inhibitor VX-680. In terms of biological role, mitotic serine/threonine kinase that contributes to the regulation of cell cycle progression. Associates with the centrosome and the spindle microtubules during mitosis and plays a critical role in various mitotic events including the establishment of mitotic spindle, centrosome duplication, centrosome separation as well as maturation, chromosomal alignment, spindle assembly checkpoint, and cytokinesis. Required for normal spindle positioning during mitosis and for the localization of NUMA1 and DCTN1 to the cell cortex during metaphase. Required for initial activation of CDK1 at centrosomes. Phosphorylates numerous target proteins, including ARHGEF2, BORA, BRCA1, CDC25B, DLGP5, HDAC6, KIF2A, LATS2, NDEL1, PARD3, PPP1R2, PLK1, RASSF1, TACC3, p53/TP53 and TPX2. Phosphorylates MCRS1 which is required for MCRS1-mediated kinetochore fiber assembly and mitotic progression. Regulates KIF2A tubulin depolymerase activity. Important for microtubule formation and/or stabilization. Required for normal axon formation. Plays a role in microtubule remodeling during neurite extension. Also acts as a key regulatory component of the p53/TP53 pathway, and particularly the checkpoint-response pathways critical for oncogenic transformation of cells, by phosphorylating and destabilizing p53/TP53. Phosphorylates its own inhibitors, the protein phosphatase type 1 (PP1) isoforms, to inhibit their activity. Inhibits cilia outgrowth. Required for cilia disassembly via phosphorylation of HDAC6 and subsequent deacetylation of alpha-tubulin. Regulates protein levels of the anti-apoptosis protein BIRC5 by suppressing the expression of the SCF(FBXL7) E3 ubiquitin-protein ligase substrate adapter FBXL7 through the phosphorylation of the transcription factor FOXP1. The protein is Aurora kinase A of Canis lupus familiaris (Dog).